Here is a 184-residue protein sequence, read N- to C-terminus: Peptide deformylase 2 (184 aa).

Fe cation is bound by residues C110 and H153. Residue E154 is part of the active site. Residue H157 participates in Fe cation binding.

Belongs to the polypeptide deformylase family. The cofactor is Fe(2+).

It carries out the reaction N-terminal N-formyl-L-methionyl-[peptide] + H2O = N-terminal L-methionyl-[peptide] + formate. Functionally, removes the formyl group from the N-terminal Met of newly synthesized proteins. Requires at least a dipeptide for an efficient rate of reaction. N-terminal L-methionine is a prerequisite for activity but the enzyme has broad specificity at other positions. The chain is Peptide deformylase 2 from Geobacillus stearothermophilus (Bacillus stearothermophilus).